Here is a 267-residue protein sequence, read N- to C-terminus: Acyl-[acyl-carrier-protein]--UDP-N-acetylglucosamine O-acyltransferase (267 aa).

The protein belongs to the transferase hexapeptide repeat family. LpxA subfamily. Homotrimer.

It localises to the cytoplasm. The catalysed reaction is a (3R)-hydroxyacyl-[ACP] + UDP-N-acetyl-alpha-D-glucosamine = a UDP-3-O-[(3R)-3-hydroxyacyl]-N-acetyl-alpha-D-glucosamine + holo-[ACP]. Its pathway is glycolipid biosynthesis; lipid IV(A) biosynthesis; lipid IV(A) from (3R)-3-hydroxytetradecanoyl-[acyl-carrier-protein] and UDP-N-acetyl-alpha-D-glucosamine: step 1/6. Involved in the biosynthesis of lipid A, a phosphorylated glycolipid that anchors the lipopolysaccharide to the outer membrane of the cell. This is Acyl-[acyl-carrier-protein]--UDP-N-acetylglucosamine O-acyltransferase from Cupriavidus necator (strain ATCC 17699 / DSM 428 / KCTC 22496 / NCIMB 10442 / H16 / Stanier 337) (Ralstonia eutropha).